A 146-amino-acid polypeptide reads, in one-letter code: 3-dehydroquinate dehydratase (146 aa).

The active-site Proton acceptor is Tyr24. Positions 73, 79, and 86 each coordinate substrate. Residue His99 is the Proton donor of the active site. Substrate-binding positions include 100–101 (LS) and Arg110.

The protein belongs to the type-II 3-dehydroquinase family. Homododecamer.

The enzyme catalyses 3-dehydroquinate = 3-dehydroshikimate + H2O. It functions in the pathway metabolic intermediate biosynthesis; chorismate biosynthesis; chorismate from D-erythrose 4-phosphate and phosphoenolpyruvate: step 3/7. Catalyzes a trans-dehydration via an enolate intermediate. This Shewanella baltica (strain OS195) protein is 3-dehydroquinate dehydratase.